Here is a 492-residue protein sequence, read N- to C-terminus: Probable cytochrome P450 516B1 (492 aa).

The chain crosses the membrane as a helical span at residues 1-17 (MYLILSLIIFLAYVAFH). Heme is bound at residue Cys438.

The protein belongs to the cytochrome P450 family. Requires heme as cofactor.

The protein resides in the membrane. This chain is Probable cytochrome P450 516B1 (cyp516B1), found in Dictyostelium discoideum (Social amoeba).